A 554-amino-acid polypeptide reads, in one-letter code: MLO-like protein 14 (554 aa).

The Extracellular portion of the chain corresponds to 1–13 (MREETEPSERTLG). The helical transmembrane segment at 14–34 (LTPTWSVATVLTIFVFVSLIV) threads the bilayer. The Cytoplasmic portion of the chain corresponds to 35–63 (ERSIHRLSNWLQKTKRKPLFAALEKMKEE). A helical transmembrane segment spans residues 64 to 84 (LMLLGFISLLLTATSSTIANI). Over 85-158 (CVSSSFHNDR…SYEGMEQLHR (74 aa)) the chain is Extracellular. Residues 159-179 (FIFIMAVTHVTYSCLTMLLAI) traverse the membrane as a helical segment. At 180 to 281 (VKIHRWRIWE…MIRSMEEEFQ (102 aa)) the chain is on the cytoplasmic side. A helical membrane pass occupies residues 282–302 (KIVGVSGPLWGFVVGFMLFNI). A topological domain (extracellular) is located at residue Lys303. A helical membrane pass occupies residues 304–324 (GSNLYFWLAIIPITLVLLVGA). Residues 325-366 (KLQHVIATLALENASITEYASGIKLRPRDELFWFKKPELLLS) lie on the Cytoplasmic side of the membrane. A helical transmembrane segment spans residues 367–387 (LIHFIQFQNAFELASFFWFWW). Over 388–406 (QFGYNSCFLRNHLLVYLRL) the chain is Extracellular. A helical transmembrane segment spans residues 407 to 427 (ILGFSGQFLCSYSTLPLYALV). Residues 428 to 554 (TQMGTNYKAA…SSSLPMRREC (127 aa)) lie on the Cytoplasmic side of the membrane. The interval 441-462 (QRVRETINGWGKATRRKRRHGL) is calmodulin-binding.

The protein belongs to the MLO family.

It is found in the membrane. Its function is as follows. May be involved in modulation of pathogen defense and leaf cell death. Activity seems to be regulated by Ca(2+)-dependent calmodulin binding and seems not to require heterotrimeric G proteins. The sequence is that of MLO-like protein 14 (MLO14) from Arabidopsis thaliana (Mouse-ear cress).